We begin with the raw amino-acid sequence, 59 residues long: U-reduvitoxin-Pr6a (59 aa).

A signal peptide spans 1–19 (MKVFLLTILLCFLIAYCAG). Cystine bridges form between cysteine 31–cysteine 46, cysteine 38–cysteine 51, and cysteine 45–cysteine 58.

It belongs to the venom Ptu1-like knottin family. As to expression, expressed by the venom gland.

It is found in the secreted. Its function is as follows. Binds reversibly and blocks P/Q-type voltage-gated calcium channels (Cav). This is U-reduvitoxin-Pr6a from Platymeris rhadamanthus (Red spot assassin bug).